The chain runs to 571 residues: Proline--tRNA ligase (571 aa).

This sequence belongs to the class-II aminoacyl-tRNA synthetase family. ProS type 1 subfamily. In terms of assembly, homodimer.

It is found in the cytoplasm. It catalyses the reaction tRNA(Pro) + L-proline + ATP = L-prolyl-tRNA(Pro) + AMP + diphosphate. Catalyzes the attachment of proline to tRNA(Pro) in a two-step reaction: proline is first activated by ATP to form Pro-AMP and then transferred to the acceptor end of tRNA(Pro). As ProRS can inadvertently accommodate and process non-cognate amino acids such as alanine and cysteine, to avoid such errors it has two additional distinct editing activities against alanine. One activity is designated as 'pretransfer' editing and involves the tRNA(Pro)-independent hydrolysis of activated Ala-AMP. The other activity is designated 'posttransfer' editing and involves deacylation of mischarged Ala-tRNA(Pro). The misacylated Cys-tRNA(Pro) is not edited by ProRS. The polypeptide is Proline--tRNA ligase (Psychromonas ingrahamii (strain DSM 17664 / CCUG 51855 / 37)).